A 274-amino-acid chain; its full sequence is Formamidopyrimidine-DNA glycosylase (274 aa).

Pro-2 functions as the Schiff-base intermediate with DNA in the catalytic mechanism. Catalysis depends on Glu-3, which acts as the Proton donor. The active-site Proton donor; for beta-elimination activity is Lys-57. DNA contacts are provided by His-92, Arg-111, and Lys-152. The FPG-type zinc finger occupies 237–271 (QVYGRKGEECRECGTLIQAKVIGQRNSYFCPDCQP). The active-site Proton donor; for delta-elimination activity is Arg-261.

It belongs to the FPG family. In terms of assembly, monomer. Zn(2+) is required as a cofactor.

It catalyses the reaction Hydrolysis of DNA containing ring-opened 7-methylguanine residues, releasing 2,6-diamino-4-hydroxy-5-(N-methyl)formamidopyrimidine.. The enzyme catalyses 2'-deoxyribonucleotide-(2'-deoxyribose 5'-phosphate)-2'-deoxyribonucleotide-DNA = a 3'-end 2'-deoxyribonucleotide-(2,3-dehydro-2,3-deoxyribose 5'-phosphate)-DNA + a 5'-end 5'-phospho-2'-deoxyribonucleoside-DNA + H(+). Its function is as follows. Involved in base excision repair of DNA damaged by oxidation or by mutagenic agents. Acts as a DNA glycosylase that recognizes and removes damaged bases. Has a preference for oxidized purines, such as 7,8-dihydro-8-oxoguanine (8-oxoG). Has AP (apurinic/apyrimidinic) lyase activity and introduces nicks in the DNA strand. Cleaves the DNA backbone by beta-delta elimination to generate a single-strand break at the site of the removed base with both 3'- and 5'-phosphates. The sequence is that of Formamidopyrimidine-DNA glycosylase from Haemophilus ducreyi (strain 35000HP / ATCC 700724).